A 307-amino-acid polypeptide reads, in one-letter code: Manganese-dependent inorganic pyrophosphatase (307 aa).

Positions 7, 11, 13, 66, 88, and 147 each coordinate Mn(2+).

It depends on Mn(2+) as a cofactor.

The protein resides in the cytoplasm. The enzyme catalyses diphosphate + H2O = 2 phosphate + H(+). This is Manganese-dependent inorganic pyrophosphatase (ppaC) from Methanocaldococcus jannaschii (strain ATCC 43067 / DSM 2661 / JAL-1 / JCM 10045 / NBRC 100440) (Methanococcus jannaschii).